Reading from the N-terminus, the 472-residue chain is Inhibitor of Apoptosis OPG037 (472 aa).

6 ANK repeats span residues 97–126 (DGNY…DPNA), 130–161 (HNKT…KINN), 233–263 (DGNT…DVNK), 267–297 (FGDS…VITD), 322–351 (YDST…ICED), and 353–377 (MYYA…SVDS).

Belongs to the orthopoxvirus OPG037 protein family. As to quaternary structure, may interact with host caspase-9-Apaf-1 complex.

It is found in the host cytoplasm. Its function is as follows. Inhibits host apoptosis. Acts by associating with host apoptosome. This is Inhibitor of Apoptosis OPG037 (OPG037) from Homo sapiens (Human).